The chain runs to 119 residues: Large ribosomal subunit protein bL20 (119 aa).

It belongs to the bacterial ribosomal protein bL20 family.

Functionally, binds directly to 23S ribosomal RNA and is necessary for the in vitro assembly process of the 50S ribosomal subunit. It is not involved in the protein synthesizing functions of that subunit. The sequence is that of Large ribosomal subunit protein bL20 from Thermoanaerobacter sp. (strain X514).